A 50-amino-acid polypeptide reads, in one-letter code: PsaJ-like protein asl3190 (50 aa).

The chain crosses the membrane as a helical span at residues 21–41 (VLAVISISVAFSTWAIFNYIF).

It belongs to the PsaJ family.

It localises to the cellular thylakoid membrane. The protein is PsaJ-like protein asl3190 of Nostoc sp. (strain PCC 7120 / SAG 25.82 / UTEX 2576).